The primary structure comprises 275 residues: 4-hydroxy-tetrahydrodipicolinate reductase (275 aa).

NAD(+) contacts are provided by residues 13–18 (GAAGKM), 108–110 (GTT), and 134–137 (APNF). Histidine 164 serves as the catalytic Proton donor/acceptor. A (S)-2,3,4,5-tetrahydrodipicolinate-binding site is contributed by histidine 165. Catalysis depends on lysine 168, which acts as the Proton donor. 174-175 (GT) is a (S)-2,3,4,5-tetrahydrodipicolinate binding site.

It belongs to the DapB family.

It localises to the cytoplasm. It catalyses the reaction (S)-2,3,4,5-tetrahydrodipicolinate + NAD(+) + H2O = (2S,4S)-4-hydroxy-2,3,4,5-tetrahydrodipicolinate + NADH + H(+). The catalysed reaction is (S)-2,3,4,5-tetrahydrodipicolinate + NADP(+) + H2O = (2S,4S)-4-hydroxy-2,3,4,5-tetrahydrodipicolinate + NADPH + H(+). It functions in the pathway amino-acid biosynthesis; L-lysine biosynthesis via DAP pathway; (S)-tetrahydrodipicolinate from L-aspartate: step 4/4. Its function is as follows. Catalyzes the conversion of 4-hydroxy-tetrahydrodipicolinate (HTPA) to tetrahydrodipicolinate. In Synechocystis sp. (strain ATCC 27184 / PCC 6803 / Kazusa), this protein is 4-hydroxy-tetrahydrodipicolinate reductase.